Reading from the N-terminus, the 743-residue chain is Protein will decrease acetylation (743 aa).

WD repeat units lie at residues 389–428 (ERSRGLTSAHLDPSECHMLAGFDNSAVQLWQLNQSYCRGK), 493–524 (LRGHTKGVTDVRFSAHYPLMYSVSKDATMRCW), 535–576 (YRSH…ALII), 577–618 (YAGH…LMRV), 619–660 (FADC…QLAE), and 661–702 (LKDH…PMSD).

Belongs to the WD repeat TAF5 family. Component of the Spt-Ada-Gcn5 acetyltransferase (SAGA) complex consisting of wda/Taf5L, Saf6, Taf9, Taf10b, Taf12, Ada1, Spt3, Spt7, Spt20, Sf3b3, Sf3b5, Nipped-A/Tra1, a histone acetyltransferase (HAT) module made up of Gcn5, Ada2b (Isoform B), Ada3 and Sgf29, and a deubiquitinase (DUB) module made up of not/nonstop, Sgf11 and e(y)2 tethered to SAGA by Atxn7. Not essential for the assembly or integrity of the SAGA complex. Not a component of the Ada2a-containing ATAC complex.

The protein localises to the nucleus. Its subcellular location is the chromosome. In terms of biological role, component of the transcription regulatory complex SAGA, a multiprotein complex that activates transcription by remodeling chromatin and mediating histone acetylation and deubiquitination. The SAGA complex predominantly acetylates histone H3. Involved in acetylation of histone H3 on 'Lys-10' (H3K9ac) by the SAGA complex in the larval central nervous system. Involved in SAGA complex coactivator functions. Required for oogenesis. This chain is Protein will decrease acetylation, found in Drosophila melanogaster (Fruit fly).